Consider the following 514-residue polypeptide: Protein spinster homolog 3 (514 aa).

The segment at 1–22 (MSTECLKPQTGGPQSQSLSQGG) is disordered. A compositionally biased stretch (low complexity) spans 9–21 (QTGGPQSQSLSQG). The next 12 membrane-spanning stretches (helical) occupy residues 54–74 (VLCY…GVLL), 88–108 (GLLQ…FGYL), 116–136 (AILS…SFIS), 149–169 (FVGT…GDLF), 176–196 (CALA…YVLG), 212–232 (LMPC…PDVP), 264–284 (FVFS…LGFW), 313–333 (LIFG…GAEA), 347–367 (LICA…LILA), 376–396 (VFLA…ADIL), 415–435 (VAHV…SSVL), and 453–473 (SFLC…LTAL). The tract at residues 482-514 (ARQPGKGTLDSKDIASRNTESQGLLSGTSTPTE) is disordered. Residues 497–514 (SRNTESQGLLSGTSTPTE) are compositionally biased toward polar residues.

Belongs to the major facilitator superfamily. Spinster (TC 2.A.1.49) family.

It localises to the membrane. Its function is as follows. Sphingolipid transporter. The protein is Protein spinster homolog 3 (Spns3) of Mus musculus (Mouse).